A 408-amino-acid chain; its full sequence is Serine/threonine transporter SstT (408 aa).

Helical transmembrane passes span glycine 14–serine 34, isoleucine 43–leucine 63, isoleucine 83–phenylalanine 103, alanine 143–leucine 163, valine 181–alanine 201, leucine 219–phenylalanine 239, tyrosine 247–alanine 269, isoleucine 290–leucine 310, and valine 332–isoleucine 352.

This sequence belongs to the dicarboxylate/amino acid:cation symporter (DAACS) (TC 2.A.23) family.

Its subcellular location is the cell inner membrane. The catalysed reaction is L-serine(in) + Na(+)(in) = L-serine(out) + Na(+)(out). It carries out the reaction L-threonine(in) + Na(+)(in) = L-threonine(out) + Na(+)(out). Functionally, involved in the import of serine and threonine into the cell, with the concomitant import of sodium (symport system). This chain is Serine/threonine transporter SstT, found in Campylobacter lari (strain RM2100 / D67 / ATCC BAA-1060).